The sequence spans 266 residues: 22 kDa alpha-zein 4 (266 aa).

The N-terminal stretch at 1 to 21 (MATKILSLLALLALFASATNA) is a signal peptide.

The protein belongs to the zein family. Interacts with OP10 (via N-terminus). In terms of tissue distribution, expressed in endosperm, mainly in the peripheral regions.

Zeins are major seed storage proteins. The chain is 22 kDa alpha-zein 4 from Zea mays (Maize).